Here is a 526-residue protein sequence, read N- to C-terminus: Vitamin B6 transporter bsu1 (526 aa).

Positions 1–53 (MASKIASLFSPSETASKDQHENVAEDLELGTASSQSDGIHETNSEYDEKKREE) are disordered. Positions 38–53 (GIHETNSEYDEKKREE) are enriched in basic and acidic residues. Transmembrane regions (helical) follow at residues 81 to 101 (WSIV…SNGF), 118 to 138 (VATL…MFLG), 147 to 167 (KPVY…CALP), 173 to 192 (MIIS…TNVA), 204 to 224 (AGVP…GAPM), 238 to 257 (WLYY…ILII), 314 to 330 (LYNF…LTAI), 349 to 366 (YLSG…QPIQ), 387 to 407 (FTSA…FAFT), 413 to 432 (PWMS…GHNW), 444 to 461 (PLLS…SFIG), and 480 to 501 (WAVA…TFYF).

It belongs to the major facilitator superfamily. CAR1 family.

The protein localises to the membrane. In terms of biological role, thiamine-regulated, high affinity import carrier of pyridoxine, pyridoxal and pyridoxamine. Also imports, but does not export, amiloride and so confers sensitivity. This chain is Vitamin B6 transporter bsu1 (bsu1), found in Schizosaccharomyces pombe (strain 972 / ATCC 24843) (Fission yeast).